Consider the following 86-residue polypeptide: MNSLLMITACLVVIGTVWAKEGYLVDVKGCKKNCWKLGDNDYCNRECKWKHIGGSYGYCYGFGCYCEGLPDSTQTWPLPNKTCGKK.

A signal peptide spans 1–19 (MNSLLMITACLVVIGTVWA). The 65-residue stretch at 20-84 (KEGYLVDVKG…TWPLPNKTCG (65 aa)) folds into the LCN-type CS-alpha/beta domain. 4 cysteine pairs are disulfide-bonded: C30–C83, C34–C59, C43–C64, and C47–C66. C83 bears the Cysteine amide mark.

The protein belongs to the long (4 C-C) scorpion toxin superfamily. Sodium channel inhibitor family. Beta subfamily. In terms of tissue distribution, expressed by the venom gland.

It localises to the secreted. In terms of biological role, binds to sodium channels (Nav) and inhibits the inactivation of the activated channels, thereby blocking neuronal transmission. The protein is Neurotoxin E1x of Centruroides sculpturatus (Arizona bark scorpion).